The following is a 324-amino-acid chain: Methionyl-tRNA formyltransferase (324 aa).

109 to 112 is a binding site for (6S)-5,6,7,8-tetrahydrofolate; sequence SLLP. Residues 305 to 324 are disordered; that stretch reads LHPGESFHKATQDNQGASET.

Belongs to the Fmt family.

The enzyme catalyses L-methionyl-tRNA(fMet) + (6R)-10-formyltetrahydrofolate = N-formyl-L-methionyl-tRNA(fMet) + (6S)-5,6,7,8-tetrahydrofolate + H(+). Attaches a formyl group to the free amino group of methionyl-tRNA(fMet). The formyl group appears to play a dual role in the initiator identity of N-formylmethionyl-tRNA by promoting its recognition by IF2 and preventing the misappropriation of this tRNA by the elongation apparatus. This Nitrosomonas europaea (strain ATCC 19718 / CIP 103999 / KCTC 2705 / NBRC 14298) protein is Methionyl-tRNA formyltransferase.